Reading from the N-terminus, the 453-residue chain is BPI fold-containing family B member 6 (453 aa).

The signal sequence occupies residues 1–18; that stretch reads MLRILCLALCSLLTGTRA. Residue N114 is glycosylated (N-linked (GlcNAc...) asparagine). C137 and C174 are oxidised to a cystine. An N-linked (GlcNAc...) asparagine glycan is attached at N190.

It belongs to the BPI/LBP/Plunc superfamily. BPI/LBP family. Detected at very low levels in normal tonsils, and at higher levels in hypertrophic tonsils.

The protein localises to the secreted. The polypeptide is BPI fold-containing family B member 6 (BPIFB6) (Homo sapiens (Human)).